A 277-amino-acid polypeptide reads, in one-letter code: 4-hydroxy-tetrahydrodipicolinate reductase (277 aa).

An NAD(+)-binding site is contributed by 9 to 14 (GATGRM). Lys-37 contributes to the NADP(+) binding site. Residue 75-77 (GTS) coordinates NAD(+). Catalysis depends on His-132, which acts as the Proton donor/acceptor. Lys-136 functions as the Proton donor in the catalytic mechanism. 142–143 (GT) provides a ligand contact to (S)-2,3,4,5-tetrahydrodipicolinate. Residues 245 to 277 (SRERATQTAPTGAASGPVDDGGPSGQAATVTSA) are disordered.

It belongs to the DapB family.

Its subcellular location is the cytoplasm. The catalysed reaction is (S)-2,3,4,5-tetrahydrodipicolinate + NAD(+) + H2O = (2S,4S)-4-hydroxy-2,3,4,5-tetrahydrodipicolinate + NADH + H(+). It carries out the reaction (S)-2,3,4,5-tetrahydrodipicolinate + NADP(+) + H2O = (2S,4S)-4-hydroxy-2,3,4,5-tetrahydrodipicolinate + NADPH + H(+). It participates in amino-acid biosynthesis; L-lysine biosynthesis via DAP pathway; (S)-tetrahydrodipicolinate from L-aspartate: step 4/4. Functionally, catalyzes the conversion of 4-hydroxy-tetrahydrodipicolinate (HTPA) to tetrahydrodipicolinate. This Clavibacter sepedonicus (Clavibacter michiganensis subsp. sepedonicus) protein is 4-hydroxy-tetrahydrodipicolinate reductase.